Here is a 341-residue protein sequence, read N- to C-terminus: MRLSDFDYDLPKELIAQKPVEPRDASRLMVVHRASGAIEHRCFRDLPEYLRPGDGLVINETRVMPARLLGSREQTGGAMEVLLLKRLDRDRWETLVKPGKKARPGERIVFGDGLLVGTVVGPTDYGGRVIDFHYEGVFENLLERLGQMPLPPYIHEQLEEPERYQTVYAREWGSAAAPTAGLHFTAELLDRLAARGVEIHRITLHVGLGTFRPVEVEDPTQHKMHSEFYHVSPEAAAGINAVRKGGGRLVAVGTTSVRTLETVADEDGTVRPGEGWTDIFIYPGYRFKAVDALVTNFHLPKSTLLMLVSALAGHDLIMRAYREAVAQRYRFFSFGDAMLIL.

The protein belongs to the QueA family. Monomer.

The protein resides in the cytoplasm. It carries out the reaction 7-aminomethyl-7-carbaguanosine(34) in tRNA + S-adenosyl-L-methionine = epoxyqueuosine(34) in tRNA + adenine + L-methionine + 2 H(+). Its pathway is tRNA modification; tRNA-queuosine biosynthesis. Transfers and isomerizes the ribose moiety from AdoMet to the 7-aminomethyl group of 7-deazaguanine (preQ1-tRNA) to give epoxyqueuosine (oQ-tRNA). The sequence is that of S-adenosylmethionine:tRNA ribosyltransferase-isomerase from Symbiobacterium thermophilum (strain DSM 24528 / JCM 14929 / IAM 14863 / T).